We begin with the raw amino-acid sequence, 463 residues long: L-seryl-tRNA(Sec) selenium transferase (463 aa).

Lys-295 carries the N6-(pyridoxal phosphate)lysine modification.

Belongs to the SelA family. Homodecamer; pentamer of dimers. Binds only one seryl-tRNA(Sec) per dimer. Pyridoxal 5'-phosphate serves as cofactor.

It is found in the cytoplasm. The catalysed reaction is L-seryl-tRNA(Sec) + selenophosphate + H(+) = L-selenocysteinyl-tRNA(Sec) + phosphate. Its pathway is aminoacyl-tRNA biosynthesis; selenocysteinyl-tRNA(Sec) biosynthesis; selenocysteinyl-tRNA(Sec) from L-seryl-tRNA(Sec) (bacterial route): step 1/1. Functionally, converts seryl-tRNA(Sec) to selenocysteinyl-tRNA(Sec) required for selenoprotein biosynthesis. In Salmonella schwarzengrund (strain CVM19633), this protein is L-seryl-tRNA(Sec) selenium transferase.